The following is a 287-amino-acid chain: Large ribosomal subunit protein uL2 (287 aa).

The segment at 214 to 287 (LGRRPEVRGS…SKRGRGGRDA (74 aa)) is disordered. Over residues 271–287 (QRRRRKSSKRGRGGRDA) the composition is skewed to basic residues.

This sequence belongs to the universal ribosomal protein uL2 family. In terms of assembly, part of the 50S ribosomal subunit. Forms a bridge to the 30S subunit in the 70S ribosome.

In terms of biological role, one of the primary rRNA binding proteins. Required for association of the 30S and 50S subunits to form the 70S ribosome, for tRNA binding and peptide bond formation. It has been suggested to have peptidyltransferase activity; this is somewhat controversial. Makes several contacts with the 16S rRNA in the 70S ribosome. This Synechococcus elongatus (strain ATCC 33912 / PCC 7942 / FACHB-805) (Anacystis nidulans R2) protein is Large ribosomal subunit protein uL2.